Here is a 168-residue protein sequence, read N- to C-terminus: MRVLILAENEFEDLELFYPLYRLREEGLEVKVASSSLEVRVGKKGYQVRPDLTYEDVKVEDYAGLVIPGGKSPERVRINERAVEIVKDFLELGKPVAAICHGPQLLISAMAVKGRRMTSWIGIRDDLIAAGALYEDRPVVVDGNVITSRMPDDLPYFCGELIKILKRY.

One can recognise a PfpI endopeptidase domain in the interval 1 to 166; the sequence is MRVLILAENE…FCGELIKILK (166 aa).

The protein belongs to the peptidase C56 family.

This is an uncharacterized protein from Archaeoglobus fulgidus (strain ATCC 49558 / DSM 4304 / JCM 9628 / NBRC 100126 / VC-16).